The primary structure comprises 480 residues: Probable WRKY transcription factor 61 (480 aa).

A disordered region spans residues Asn30–Ser108. Basic and acidic residues-rich tracts occupy residues Arg57–Leu66 and Asn84–Lys106. Residues Cys185–Pro251 constitute a DNA-binding region (WRKY).

The protein resides in the nucleus. Functionally, transcription factor. Interacts specifically with the W box (5'-(T)TGAC[CT]-3'), a frequently occurring elicitor-responsive cis-acting element. In Arabidopsis thaliana (Mouse-ear cress), this protein is Probable WRKY transcription factor 61 (WRKY61).